The sequence spans 461 residues: ATP-dependent protease ATPase subunit HslU (461 aa).

ATP contacts are provided by residues V21, 63-68 (GVGKTE), D274, E339, and R411.

Belongs to the ClpX chaperone family. HslU subfamily. As to quaternary structure, a double ring-shaped homohexamer of HslV is capped on each side by a ring-shaped HslU homohexamer. The assembly of the HslU/HslV complex is dependent on binding of ATP.

Its subcellular location is the cytoplasm. In terms of biological role, ATPase subunit of a proteasome-like degradation complex; this subunit has chaperone activity. The binding of ATP and its subsequent hydrolysis by HslU are essential for unfolding of protein substrates subsequently hydrolyzed by HslV. HslU recognizes the N-terminal part of its protein substrates and unfolds these before they are guided to HslV for hydrolysis. This Caldanaerobacter subterraneus subsp. tengcongensis (strain DSM 15242 / JCM 11007 / NBRC 100824 / MB4) (Thermoanaerobacter tengcongensis) protein is ATP-dependent protease ATPase subunit HslU.